The chain runs to 155 residues: Protein LOL2 (155 aa).

Position 1 is an N-acetylmethionine (M1). A disordered region spans residues 1–35 (MEEIQQQTQKEEQKHREEEEEEEEGPPPGWESAVL). Putative zinc finger stretches follow at residues 60–90 (QMVCGSCRRLLSYLRGSKHVKCSSCQTVNLV) and 98–128 (QVNCNNCKLLLMYPYGAPAVRCSSCNSVTDI). The interval 130-155 (ENNKRPPWSEQQGPLKSLSSLRRAEN) is disordered. The span at 138 to 149 (SEQQGPLKSLSS) shows a compositional bias: polar residues.

The protein resides in the nucleus. Functionally, putative zinc finger that may be involved in programmed cell death and defense response. The polypeptide is Protein LOL2 (LOL2) (Arabidopsis thaliana (Mouse-ear cress)).